Reading from the N-terminus, the 335-residue chain is tRNA (guanine(6)-N2)-methyltransferase (335 aa).

One can recognise a THUMP domain in the interval 47–150; it reads EALGLRLAHH…GEEAFLGVQL (104 aa). S-adenosyl-L-methionine is bound by residues 195–197, 243–244, and Asn260; these read SGT and DA.

This sequence belongs to the methyltransferase superfamily. As to quaternary structure, monomer in solution.

Its subcellular location is the cytoplasm. It catalyses the reaction guanosine(6) in tRNA + S-adenosyl-L-methionine = N(2)-methylguanosine(6) in tRNA + S-adenosyl-L-homocysteine + H(+). Functionally, S-adenosyl-L-methionine-dependent methyltransferase that catalyzes the methylation of the guanosine nucleotide at position 6 (m2G6) in tRNA(Phe). The polypeptide is tRNA (guanine(6)-N2)-methyltransferase (Thermus thermophilus (strain ATCC BAA-163 / DSM 7039 / HB27)).